The sequence spans 288 residues: Acetyl-coenzyme A carboxylase carboxyl transferase subunit beta (288 aa).

The CoA carboxyltransferase N-terminal domain occupies 30 to 288 (IMTKCPKCKK…KMHQEVKTNA (259 aa)). Cys-34, Cys-37, Cys-53, and Cys-56 together coordinate Zn(2+). The C4-type zinc finger occupies 34 to 56 (CPKCKKIMYTKELAENLNVCFNC).

Belongs to the AccD/PCCB family. In terms of assembly, acetyl-CoA carboxylase is a heterohexamer composed of biotin carboxyl carrier protein (AccB), biotin carboxylase (AccC) and two subunits each of ACCase subunit alpha (AccA) and ACCase subunit beta (AccD). The cofactor is Zn(2+).

The protein localises to the cytoplasm. It catalyses the reaction N(6)-carboxybiotinyl-L-lysyl-[protein] + acetyl-CoA = N(6)-biotinyl-L-lysyl-[protein] + malonyl-CoA. The protein operates within lipid metabolism; malonyl-CoA biosynthesis; malonyl-CoA from acetyl-CoA: step 1/1. In terms of biological role, component of the acetyl coenzyme A carboxylase (ACC) complex. Biotin carboxylase (BC) catalyzes the carboxylation of biotin on its carrier protein (BCCP) and then the CO(2) group is transferred by the transcarboxylase to acetyl-CoA to form malonyl-CoA. The polypeptide is Acetyl-coenzyme A carboxylase carboxyl transferase subunit beta (Staphylococcus saprophyticus subsp. saprophyticus (strain ATCC 15305 / DSM 20229 / NCIMB 8711 / NCTC 7292 / S-41)).